A 762-amino-acid chain; its full sequence is Probable inorganic carbon transporter subunit DabA (762 aa).

The Zn(2+) site is built by C279, D281, H461, and C476.

This sequence belongs to the inorganic carbon transporter (TC 9.A.2) DabA family. Forms a complex with DabB. The cofactor is Zn(2+).

The protein resides in the cell inner membrane. Part of an energy-coupled inorganic carbon pump. This is Probable inorganic carbon transporter subunit DabA from Legionella pneumophila (strain Corby).